The sequence spans 358 residues: MRKIIHIDMDCYFAAVEMRDFPEFKGKPLAVGGRSDRRGVISTCNYEARKFGVRSAMSSHKALQLCPDLVLVPGRMDVYKSVSAQIRSVFARYTDIIEPLSLDEAYLDVTDSPHCKGSATLMAKAIREEIFELTGLTASAGIAPIKFLAKIASDLNKPNGQYLITPERIPAFVKDLPLIKIPGVGKVTAAKLEALGLLNCQDVQQYPKDKLIHAFGKFGVVLIDRAHGIDPRALSMDRLRKSVGVETTLAQDIYSLEQCHQILPGLIQELGSRCAKSAKQRQIHKQVVKLKFSDFKQTTIEHRSDELNINLFYELLSQALARSQGRGIRLLGVSVGLSDNQVNEHAPSFYGAQLDLGL.

Residues 4–185 (IIHIDMDCYF…LPLIKIPGVG (182 aa)) enclose the UmuC domain. Residues Asp8 and Asp103 each coordinate Mg(2+). The active site involves Glu104.

The protein belongs to the DNA polymerase type-Y family. Monomer. Requires Mg(2+) as cofactor.

It is found in the cytoplasm. It carries out the reaction DNA(n) + a 2'-deoxyribonucleoside 5'-triphosphate = DNA(n+1) + diphosphate. Functionally, poorly processive, error-prone DNA polymerase involved in untargeted mutagenesis. Copies undamaged DNA at stalled replication forks, which arise in vivo from mismatched or misaligned primer ends. These misaligned primers can be extended by PolIV. Exhibits no 3'-5' exonuclease (proofreading) activity. May be involved in translesional synthesis, in conjunction with the beta clamp from PolIII. In Shewanella denitrificans (strain OS217 / ATCC BAA-1090 / DSM 15013), this protein is DNA polymerase IV.